The sequence spans 432 residues: Adenylosuccinate synthetase 2 (432 aa).

Residues 12 to 18 (GDEGKGR) and 40 to 42 (GHT) each bind GTP. The active-site Proton acceptor is the Asp13. Mg(2+)-binding residues include Asp13 and Gly40. IMP-binding positions include 13-16 (DEGK), 38-41 (NAGH), Thr128, Arg142, Gln222, Thr237, and Arg301. His41 functions as the Proton donor in the catalytic mechanism. Position 297 to 303 (297 to 303 (VNTGRPR)) interacts with substrate. Residues Arg303, 329 to 331 (KLD), and 411 to 413 (TTG) contribute to the GTP site.

The protein belongs to the adenylosuccinate synthetase family. As to quaternary structure, homodimer. The cofactor is Mg(2+).

The protein localises to the cytoplasm. The enzyme catalyses IMP + L-aspartate + GTP = N(6)-(1,2-dicarboxyethyl)-AMP + GDP + phosphate + 2 H(+). It functions in the pathway purine metabolism; AMP biosynthesis via de novo pathway; AMP from IMP: step 1/2. In terms of biological role, plays an important role in the de novo pathway of purine nucleotide biosynthesis. Catalyzes the first committed step in the biosynthesis of AMP from IMP. The chain is Adenylosuccinate synthetase 2 from Burkholderia lata (strain ATCC 17760 / DSM 23089 / LMG 22485 / NCIMB 9086 / R18194 / 383).